We begin with the raw amino-acid sequence, 257 residues long: Adenosylcobinamide-GDP ribazoletransferase (257 aa).

7 consecutive transmembrane segments (helical) span residues 30–50 (IVYF…IGWI), 52–72 (MLLF…VLIT), 109–129 (SLLA…DIIS), 132–152 (SLWV…LLTY), 175–195 (LITA…FIFL), 198–218 (NIVL…IILF), and 237–257 (GIEL…FMFF).

Belongs to the CobS family. It depends on Mg(2+) as a cofactor.

The protein resides in the cell membrane. It carries out the reaction alpha-ribazole + adenosylcob(III)inamide-GDP = adenosylcob(III)alamin + GMP + H(+). The catalysed reaction is alpha-ribazole 5'-phosphate + adenosylcob(III)inamide-GDP = adenosylcob(III)alamin 5'-phosphate + GMP + H(+). It functions in the pathway cofactor biosynthesis; adenosylcobalamin biosynthesis; adenosylcobalamin from cob(II)yrinate a,c-diamide: step 7/7. Joins adenosylcobinamide-GDP and alpha-ribazole to generate adenosylcobalamin (Ado-cobalamin). Also synthesizes adenosylcobalamin 5'-phosphate from adenosylcobinamide-GDP and alpha-ribazole 5'-phosphate. The chain is Adenosylcobinamide-GDP ribazoletransferase from Clostridioides difficile (strain 630) (Peptoclostridium difficile).